Here is a 127-residue protein sequence, read N- to C-terminus: MARVKRAVNAHKKRRVVLERASGYRGQRSRLYRKAKEQLLHSFNYNFRDRKARKGDFRKLWIQRINAAVRAEGITYNRFIQGLRLAGIELDRRALAEIAVSDPDTFKTIVDAAKAALPEDVNAPVEA.

The protein belongs to the bacterial ribosomal protein bL20 family.

Binds directly to 23S ribosomal RNA and is necessary for the in vitro assembly process of the 50S ribosomal subunit. It is not involved in the protein synthesizing functions of that subunit. The protein is Large ribosomal subunit protein bL20 of Bifidobacterium longum (strain DJO10A).